The chain runs to 337 residues: uncharacterized protein (337 aa).

The protein belongs to the mimivirus R69 family.

This is an uncharacterized protein from Acanthamoeba polyphaga mimivirus (APMV).